Reading from the N-terminus, the 710-residue chain is DNA polymerase epsilon subunit B (710 aa).

The interval 116–167 is disordered; it reads FLKRPNSPTDTEITTLSQGSATSVVNPDSHSPMMLEEGSPINSDSEPISEHE. Residues 121–144 show a composition bias toward polar residues; sequence NSPTDTEITTLSQGSATSVVNPDS.

It belongs to the DNA polymerase epsilon subunit B family. Heterotetramer. Consists of four subunits: POL2, DPB2, DPB3 and DPB4.

It localises to the nucleus. In terms of biological role, as accessory component of the DNA polymerase epsilon (DNA polymerase II) participates in chromosomal DNA replication. The protein is DNA polymerase epsilon subunit B (DPB2) of Kluyveromyces lactis (strain ATCC 8585 / CBS 2359 / DSM 70799 / NBRC 1267 / NRRL Y-1140 / WM37) (Yeast).